Consider the following 339-residue polypeptide: Dihydroorotase (339 aa).

Positions 12 and 14 each coordinate Zn(2+). Substrate contacts are provided by residues 14 to 16 and Asn40; that span reads HVR. Positions 94, 133, 167, and 239 each coordinate Zn(2+). Lys94 is subject to N6-carboxylysine. His133 lines the substrate pocket. Asp239 is an active-site residue. Substrate contacts are provided by His243 and Ala255.

Belongs to the metallo-dependent hydrolases superfamily. DHOase family. Class II DHOase subfamily. As to quaternary structure, homodimer. Zn(2+) is required as a cofactor.

The catalysed reaction is (S)-dihydroorotate + H2O = N-carbamoyl-L-aspartate + H(+). It participates in pyrimidine metabolism; UMP biosynthesis via de novo pathway; (S)-dihydroorotate from bicarbonate: step 3/3. Catalyzes the reversible cyclization of carbamoyl aspartate to dihydroorotate. The chain is Dihydroorotase from Helicobacter pylori (strain ATCC 700392 / 26695) (Campylobacter pylori).